Consider the following 208-residue polypeptide: MIGLIGKKIGMTQIFNEVGHLMPVTVIQVEPNTVVALKDKEKFGYSSVVLGLGELKEKHTSKPYAGQFSGDIKPLKLLKEFRDFDKEVAVGDKLGVEAFEKVSYLDITAISKGKGFQGVMKRWGYGGGRASHGSKFHREAGSTGHCTTPGRSFKNTTMPGRMGFDKVTVQNLQIVKIDPELGVIMVRGSVPGKKDATVFLKSAVKRAK.

Residues 134–159 are disordered; sequence SKFHREAGSTGHCTTPGRSFKNTTMP. Residues 144–158 show a composition bias toward polar residues; the sequence is GHCTTPGRSFKNTTM.

It belongs to the universal ribosomal protein uL3 family. As to quaternary structure, part of the 50S ribosomal subunit. Forms a cluster with proteins L14 and L19.

One of the primary rRNA binding proteins, it binds directly near the 3'-end of the 23S rRNA, where it nucleates assembly of the 50S subunit. The chain is Large ribosomal subunit protein uL3 from Treponema denticola (strain ATCC 35405 / DSM 14222 / CIP 103919 / JCM 8153 / KCTC 15104).